The following is a 652-amino-acid chain: MNKRMNELVALLNRYATEYYTSDNPSVSDSEYDRLYRELVELETAYPEQVLADSPTHRVGGKVLDGFEKYSHQYPLYSLQDAFSCEELDAFDARVRKEVAHPTYICELKIDGLSISLTYEKGILVAGVTRGDGSIGENITENLKRVKDIPLTLPEELDITVRGECYMPRASFDQVNQARQENGEPEFANPRNAAAGTLRQLDTAVVAKRNLATFLYQEASPSTRDSQEKGLKYLEQLGFVVNPKRILAENIDEIWNFIQEVGQERENLPYDIDGVVIKVNDLASQEELGFTVKAPKWAVAYKFPAEEKEAQLLSVDWTVGRTGVVTPTANLTPVQLAGTTVSRATLHNVDYIAEKDIRKDDTVIVYKAGDIIPAVLRVVESKRVSEEKLDIPTNCPSCNSDLLHFEDEVALRCINPRCPAQIMEGLIHFASRDAMNITGLGPSIVEKLFAANLVKDVADIYRLQEEDFLLLEGVKEKSAAKLYQAIQASKENSAEKLLFGLGIRHVGSKVSQLLLQYFHSIENLSQADSEEVASIESLGGVIAKSLQTYFATEGSEILLRELKETGVNLDYKGQTVVADAALSGLTVVLTGKLERLKRSEAKSKLESLGAKVTGSISKKTDLVVVGADAGSKLQKAQELGIQVRDEAWLESL.

Residues 29-33, 78-79, and Glu-107 each bind NAD(+); these read DSEYD and SL. Lys-109 acts as the N6-AMP-lysine intermediate in catalysis. Arg-130, Glu-164, Lys-278, and Lys-302 together coordinate NAD(+). Residues Cys-395, Cys-398, Cys-413, and Cys-418 each contribute to the Zn(2+) site. The BRCT domain maps to 577–652; it reads VADAALSGLT…VRDEAWLESL (76 aa).

The protein belongs to the NAD-dependent DNA ligase family. LigA subfamily. The cofactor is Mg(2+). Mn(2+) serves as cofactor.

The catalysed reaction is NAD(+) + (deoxyribonucleotide)n-3'-hydroxyl + 5'-phospho-(deoxyribonucleotide)m = (deoxyribonucleotide)n+m + AMP + beta-nicotinamide D-nucleotide.. DNA ligase that catalyzes the formation of phosphodiester linkages between 5'-phosphoryl and 3'-hydroxyl groups in double-stranded DNA using NAD as a coenzyme and as the energy source for the reaction. It is essential for DNA replication and repair of damaged DNA. In Streptococcus pneumoniae serotype 4 (strain ATCC BAA-334 / TIGR4), this protein is DNA ligase.